The chain runs to 424 residues: CinA-like protein (424 aa).

Belongs to the CinA family.

This chain is CinA-like protein, found in Nostoc sp. (strain PCC 7120 / SAG 25.82 / UTEX 2576).